The sequence spans 129 residues: Follitropin subunit beta (129 aa).

The N-terminal stretch at 1 to 19 (MKSVQFCFLFCCWRAICCR) is a signal peptide. Disulfide bonds link Cys-21/Cys-69, Cys-35/Cys-84, Cys-38/Cys-122, Cys-46/Cys-100, Cys-50/Cys-102, and Cys-105/Cys-112. N-linked (GlcNAc...) asparagine glycosylation is found at Asn-25 and Asn-42.

The protein belongs to the glycoprotein hormones subunit beta family. In terms of assembly, heterodimer. The active follitropin is a heterodimer composed of an alpha chain/CGA shared with other hormones and a unique beta chain/FSHB shown here.

It is found in the secreted. Functionally, together with the alpha chain CGA constitutes follitropin, the follicle-stimulating hormone, and provides its biological specificity to the hormone heterodimer. Binds FSHR, a G protein-coupled receptor, on target cells to activate downstream signaling pathways. Follitropin is involved in follicle development and spermatogenesis in reproductive organs. This chain is Follitropin subunit beta (FSHB), found in Ovis aries (Sheep).